A 72-amino-acid polypeptide reads, in one-letter code: Protein P13 (72 aa).

It is found in the virion membrane. In Pseudomonas phage phi6 (Bacteriophage phi-6), this protein is Protein P13 (P13).